A 358-amino-acid chain; its full sequence is Golgi-resident adenosine 3',5'-bisphosphate 3'-phosphatase (358 aa).

Met-1 bears the N-acetylmethionine mark. The Cytoplasmic segment spans residues 1-12 (MAPMGIRLSPLG). A helical transmembrane segment spans residues 13-33 (VAVFCLLGLGVLYHLYSGFLA). Residues 34 to 358 (GRFSLFGLGG…KLPDLEKMGH (325 aa)) are Lumenal-facing. Residues 85 to 106 (RESNVLHEKSKGKTREGADDKM) form a disordered region. Asp-110 functions as the Proton acceptor in the catalytic mechanism. 4 residues coordinate Mg(2+): Glu-133, Asp-174, Leu-176, and Asp-177. The active-site Proton acceptor is Thr-179. Residues Ser-242 and His-245 each contribute to the AMP site. N-linked (GlcNAc...) asparagine glycosylation occurs at Asn-259. 2 residues coordinate AMP: Gly-268 and Lys-272. Mg(2+) is bound at residue Asp-300.

The protein belongs to the inositol monophosphatase superfamily. The cofactor is Mg(2+). Post-translationally, contains N-linked glycan resistant to endoglycosydase H.

It localises to the golgi apparatus. The protein localises to the trans-Golgi network membrane. The enzyme catalyses adenosine 3',5'-bisphosphate + H2O = AMP + phosphate. It participates in sulfur metabolism. Strongly inhibited by lithium. Functionally, exhibits 3'-nucleotidase activity toward adenosine 3',5'-bisphosphate (PAP), namely hydrolyzes adenosine 3',5'-bisphosphate into adenosine 5'-monophosphate (AMP) and a phosphate. May play a role in the formation of skeletal elements derived through endochondral ossification, possibly by clearing adenosine 3',5'-bisphosphate produced by Golgi sulfotransferases during glycosaminoglycan sulfation. Has no activity toward 3'-phosphoadenosine 5'-phosphosulfate (PAPS) or inositol phosphate (IP) substrates including I(1)P, I(1,4)P2, I(1,3,4)P3, I(1,4,5)P3 and I(1,3,4,5)P4. The protein is Golgi-resident adenosine 3',5'-bisphosphate 3'-phosphatase (BPNT2) of Callithrix jacchus (White-tufted-ear marmoset).